The primary structure comprises 156 residues: ATP synthase subunit b (156 aa).

A helical transmembrane segment spans residues 3–23 (ITLTIFAQALAFAGLIWIVAT).

This sequence belongs to the ATPase B chain family. As to quaternary structure, F-type ATPases have 2 components, F(1) - the catalytic core - and F(0) - the membrane proton channel. F(1) has five subunits: alpha(3), beta(3), gamma(1), delta(1), epsilon(1). F(0) has three main subunits: a(1), b(2) and c(10-14). The alpha and beta chains form an alternating ring which encloses part of the gamma chain. F(1) is attached to F(0) by a central stalk formed by the gamma and epsilon chains, while a peripheral stalk is formed by the delta and b chains.

The protein localises to the cell inner membrane. In terms of biological role, f(1)F(0) ATP synthase produces ATP from ADP in the presence of a proton or sodium gradient. F-type ATPases consist of two structural domains, F(1) containing the extramembraneous catalytic core and F(0) containing the membrane proton channel, linked together by a central stalk and a peripheral stalk. During catalysis, ATP synthesis in the catalytic domain of F(1) is coupled via a rotary mechanism of the central stalk subunits to proton translocation. Component of the F(0) channel, it forms part of the peripheral stalk, linking F(1) to F(0). This chain is ATP synthase subunit b, found in Xanthomonas axonopodis pv. citri (strain 306).